The sequence spans 41 residues: Large ribosomal subunit protein bL36 (41 aa).

This sequence belongs to the bacterial ribosomal protein bL36 family.

This Methylobacterium nodulans (strain LMG 21967 / CNCM I-2342 / ORS 2060) protein is Large ribosomal subunit protein bL36.